The chain runs to 649 residues: Glycerol-3-phosphate dehydrogenase, mitochondrial (649 aa).

Residue 69–97 (DVLIIGGGATGTGVAVDASTRGLNVCLLE) coordinates FAD.

Belongs to the FAD-dependent glycerol-3-phosphate dehydrogenase family. FAD is required as a cofactor.

The protein resides in the mitochondrion. It carries out the reaction a quinone + sn-glycerol 3-phosphate = dihydroxyacetone phosphate + a quinol. Its pathway is polyol metabolism; glycerol degradation via glycerol kinase pathway; glycerone phosphate from sn-glycerol 3-phosphate (anaerobic route): step 1/1. This Schizosaccharomyces pombe (strain 972 / ATCC 24843) (Fission yeast) protein is Glycerol-3-phosphate dehydrogenase, mitochondrial (gut2).